The chain runs to 2752 residues: Protein PFF0380w (2752 aa).

A compositionally biased stretch (basic and acidic residues) spans glutamate 20–arginine 30. Disordered stretches follow at residues glutamate 20–asparagine 44, histidine 139–tyrosine 160, asparagine 634–lysine 678, aspartate 1048–asparagine 1130, and glutamate 1153–glycine 1172. Low complexity predominate over residues tyrosine 32–asparagine 44. Basic and acidic residues predominate over residues lysine 142 to asparagine 157. A compositionally biased stretch (low complexity) spans asparagine 640 to asparagine 674. The segment covering aspartate 1048–threonine 1060 has biased composition (basic and acidic residues). Positions arginine 1061–aspartate 1075 are enriched in polar residues. Residues asparagine 1076–glutamine 1090 are compositionally biased toward basic and acidic residues. The span at arginine 1091–asparagine 1130 shows a compositional bias: polar residues. A compositionally biased stretch (low complexity) spans asparagine 1162 to glycine 1172. The HTH OST-type domain maps to threonine 1277 to lysine 1354. Disordered regions lie at residues aspartate 1457–serine 1499, alanine 1958–leucine 1999, lysine 2063–lysine 2099, and aspartate 2501–asparagine 2537. 2 stretches are compositionally biased toward low complexity: residues asparagine 1469 to serine 1499 and asparagine 1962 to asparagine 1975. Over residues asparagine 1976–asparagine 1994 the composition is skewed to acidic residues. Composition is skewed to low complexity over residues asparagine 2068–asparagine 2095 and aspartate 2501–asparagine 2526.

The polypeptide is Protein PFF0380w (Plasmodium falciparum (isolate 3D7)).